The chain runs to 500 residues: Glycerol kinase (500 aa).

Thr12 contributes to the ADP binding site. Thr12, Thr13, and Ser14 together coordinate ATP. Thr12 provides a ligand contact to sn-glycerol 3-phosphate. Arg16 provides a ligand contact to ADP. Residues Arg82, Glu83, Tyr134, and Asp246 each contribute to the sn-glycerol 3-phosphate site. Residues Arg82, Glu83, Tyr134, Asp246, and Gln247 each coordinate glycerol. The ADP site is built by Thr268 and Gly312. Residues Thr268, Gly312, Gln316, and Gly413 each coordinate ATP. Residues Gly413 and Asn417 each contribute to the ADP site.

This sequence belongs to the FGGY kinase family.

The catalysed reaction is glycerol + ATP = sn-glycerol 3-phosphate + ADP + H(+). It participates in polyol metabolism; glycerol degradation via glycerol kinase pathway; sn-glycerol 3-phosphate from glycerol: step 1/1. With respect to regulation, inhibited by fructose 1,6-bisphosphate (FBP). Key enzyme in the regulation of glycerol uptake and metabolism. Catalyzes the phosphorylation of glycerol to yield sn-glycerol 3-phosphate. In Saccharopolyspora erythraea (strain ATCC 11635 / DSM 40517 / JCM 4748 / NBRC 13426 / NCIMB 8594 / NRRL 2338), this protein is Glycerol kinase.